The following is a 240-amino-acid chain: Peptidyl-tRNA hydrolase 2 (240 aa).

Residue Tyr-60 participates in tRNA binding. The active-site Proton acceptor is His-65. Positions 111, 113, and 159 each coordinate tRNA.

This sequence belongs to the PTH family. In terms of assembly, monomer.

The protein localises to the cytoplasm. It carries out the reaction an N-acyl-L-alpha-aminoacyl-tRNA + H2O = an N-acyl-L-amino acid + a tRNA + H(+). Hydrolyzes ribosome-free peptidyl-tRNAs (with 1 or more amino acids incorporated), which drop off the ribosome during protein synthesis, or as a result of ribosome stalling. Its function is as follows. Catalyzes the release of premature peptidyl moieties from peptidyl-tRNA molecules trapped in stalled 50S ribosomal subunits, and thus maintains levels of free tRNAs and 50S ribosomes. This Corynebacterium jeikeium (strain K411) protein is Peptidyl-tRNA hydrolase 2.